We begin with the raw amino-acid sequence, 372 residues long: Queuine tRNA-ribosyltransferase (372 aa).

The Proton acceptor role is filled by D90. Substrate-binding positions include 90-94 (DSGGF), D144, Q193, and G220. Positions 251 to 257 (GVGTPED) are RNA binding. D270 acts as the Nucleophile in catalysis. The segment at 275–279 (TRNAR) is RNA binding; important for wobble base 34 recognition. Positions 308, 310, 313, and 339 each coordinate Zn(2+).

It belongs to the queuine tRNA-ribosyltransferase family. In terms of assembly, homodimer. Within each dimer, one monomer is responsible for RNA recognition and catalysis, while the other monomer binds to the replacement base PreQ1. Zn(2+) is required as a cofactor.

The catalysed reaction is 7-aminomethyl-7-carbaguanine + guanosine(34) in tRNA = 7-aminomethyl-7-carbaguanosine(34) in tRNA + guanine. It participates in tRNA modification; tRNA-queuosine biosynthesis. Functionally, catalyzes the base-exchange of a guanine (G) residue with the queuine precursor 7-aminomethyl-7-deazaguanine (PreQ1) at position 34 (anticodon wobble position) in tRNAs with GU(N) anticodons (tRNA-Asp, -Asn, -His and -Tyr). Catalysis occurs through a double-displacement mechanism. The nucleophile active site attacks the C1' of nucleotide 34 to detach the guanine base from the RNA, forming a covalent enzyme-RNA intermediate. The proton acceptor active site deprotonates the incoming PreQ1, allowing a nucleophilic attack on the C1' of the ribose to form the product. After dissociation, two additional enzymatic reactions on the tRNA convert PreQ1 to queuine (Q), resulting in the hypermodified nucleoside queuosine (7-(((4,5-cis-dihydroxy-2-cyclopenten-1-yl)amino)methyl)-7-deazaguanosine). The sequence is that of Queuine tRNA-ribosyltransferase from Campylobacter hominis (strain ATCC BAA-381 / DSM 21671 / CCUG 45161 / LMG 19568 / NCTC 13146 / CH001A).